A 220-amino-acid polypeptide reads, in one-letter code: Casparian strip membrane protein 4 (220 aa).

The segment at 1–39 is disordered; that stretch reads MDSRREVEESSTAPILESKRTRSNGKGKSIDGDHSPPHA. Residues 1–60 lie on the Cytoplasmic side of the membrane; sequence MDSRREVEESSTAPILESKRTRSNGKGKSIDGDHSPPHAATVVTTKATPLQKGGMKKGIA. A helical transmembrane segment spans residues 61 to 81; it reads ILDFILRLGAIGAALGAAVIM. Residues 82–108 are Extracellular-facing; that stretch reads GTNEQILPFFTQFLQFHAQWDDFPMFK. The helical transmembrane segment at 109–129 threads the bilayer; that stretch reads FFVVANGAAAGFLILSLPFSI. Over 130 to 141 the chain is Cytoplasmic; that stretch reads VCIVRPLAAGPR. The chain crosses the membrane as a helical span at residues 142 to 162; that stretch reads FLLVIVDLVLMALVVAAASSA. Topologically, residues 163-194 are extracellular; that stretch reads AAVVYLAHNGSQDANWNAICQQFTDFCQGSSL. Asn171 is a glycosylation site (N-linked (GlcNAc...) asparagine). A helical transmembrane segment spans residues 195–215; it reads AVVASFVASVFLACLVVVSSV. The Cytoplasmic portion of the chain corresponds to 216–220; that stretch reads ALKRT.

Belongs to the Casparian strip membrane proteins (CASP) family. As to quaternary structure, homodimer and heterodimers.

It localises to the cell membrane. Its function is as follows. Regulates membrane-cell wall junctions and localized cell wall deposition. Required for establishment of the Casparian strip membrane domain (CSD) and the subsequent formation of Casparian strips, a cell wall modification of the root endodermis that determines an apoplastic barrier between the intraorganismal apoplasm and the extraorganismal apoplasm and prevents lateral diffusion. This chain is Casparian strip membrane protein 4, found in Medicago truncatula (Barrel medic).